The following is a 425-amino-acid chain: Histidine--tRNA ligase (425 aa).

Belongs to the class-II aminoacyl-tRNA synthetase family. Homodimer.

It is found in the cytoplasm. The catalysed reaction is tRNA(His) + L-histidine + ATP = L-histidyl-tRNA(His) + AMP + diphosphate + H(+). The protein is Histidine--tRNA ligase of Listeria innocua serovar 6a (strain ATCC BAA-680 / CLIP 11262).